A 342-amino-acid chain; its full sequence is Methyltransferase ungE' (342 aa).

This sequence belongs to the methyltransferase superfamily.

The protein operates within secondary metabolite biosynthesis. In terms of biological role, methyltransferase; part of the gene cluster that mediates the biosynthesis of the unguisins, gamma-aminobutyric acid (GABA)-containing fungal cyclic heptapeptides with the amino acid sequence cyclo-(D-Ala1-D-Val2-L-Leu3-beta-MePhe4-D-Ala5-D-Trp6-GABA7) for unguisin H and cyclo-(D-Ala1-D-Ala2-L-Leu3-beta-MePhe4-D-Ala5-D-Trp6-GABA7) for unguisin I. Within the pathway, the methyltransferase ungE' is probably involved in the synthesis of the (2R,3R)-beta-methylphenylalanine residue incorporated by the module 4 of the nonribosomal peptide synthetase (NRPS) ungA'. The alanine racemase ungC' catalyzes the interconversion of L-alanine and D-alanine, providing the D-alanine which is accepted by the first adenylation domain of ungA'. UngA' is the main enzyme within the cluster which condenses the 7 residues using its respective 7 modules. The terminal condensation domain (Ct) is involved in cyclization with D-alanine and thereby releasing of unguisins H and I. Finally, the hydrolase ungD' catalyzes the hydrolysis between the D-tryptophan and GABA residues of unguisins H and I to produce the corresponding linear peptides. This is Methyltransferase ungE' from Aspergillus campestris (strain IBT 28561).